The primary structure comprises 64 residues: Translation machinery-associated protein 7 (64 aa).

2 disordered regions span residues 1–38 (MSSR…ADAA) and 45–64 (ANMK…SGKK). Residues 27 to 38 (IAFKEKQKADAA) show a composition bias toward basic and acidic residues. Positions 53–64 (LVGGGIKKSGKK) are enriched in gly residues.

It belongs to the TMA7 family. As to quaternary structure, interacts with the 40S ribosomal subunit.

Its subcellular location is the cytoplasm. It is found in the nucleus. In terms of biological role, involved in protein synthesis. This chain is Translation machinery-associated protein 7 (TMA7), found in Saccharomyces cerevisiae (strain ATCC 204508 / S288c) (Baker's yeast).